A 388-amino-acid chain; its full sequence is 3-dehydroquinate synthase (388 aa).

The protein belongs to the archaeal-type DHQ synthase family.

The enzyme catalyses 2-amino-2,3,7-trideoxy-D-lyxo-hept-6-ulosonate + NAD(+) + H2O = 3-dehydroquinate + NH4(+) + NADH + H(+). In terms of biological role, catalyzes the oxidative deamination and cyclization of 2-amino-3,7-dideoxy-D-threo-hept-6-ulosonic acid (ADH) to yield 3-dehydroquinate (DHQ), which is fed into the canonical shikimic pathway of aromatic amino acid biosynthesis. The sequence is that of 3-dehydroquinate synthase from Haloarcula marismortui (strain ATCC 43049 / DSM 3752 / JCM 8966 / VKM B-1809) (Halobacterium marismortui).